We begin with the raw amino-acid sequence, 277 residues long: Large ribosomal subunit protein uL2 (277 aa).

2 disordered regions span residues Leu37–His58 and Gly222–Arg277. Residues Val268 to Arg277 show a composition bias toward basic residues.

The protein belongs to the universal ribosomal protein uL2 family. Part of the 50S ribosomal subunit. Forms a bridge to the 30S subunit in the 70S ribosome.

Its function is as follows. One of the primary rRNA binding proteins. Required for association of the 30S and 50S subunits to form the 70S ribosome, for tRNA binding and peptide bond formation. It has been suggested to have peptidyltransferase activity; this is somewhat controversial. Makes several contacts with the 16S rRNA in the 70S ribosome. The sequence is that of Large ribosomal subunit protein uL2 from Parafrankia sp. (strain EAN1pec).